The chain runs to 1905 residues: Bromodomain adjacent to zinc finger domain protein 2A (1905 aa).

Disordered regions lie at residues 1 to 59 and 362 to 434; these read MEME…NGLS and TSIF…PTTS. 3 stretches are compositionally biased toward polar residues: residues 35-59, 379-391, and 399-420; these read TNGSPMNFPQQGKSLNGDVNVNGLS, LQDNSFDLNNGSD, and TQSSDFPPSLTQPAPDQSSTIQ. Residue Thr507 is modified to Phosphothreonine. Phosphoserine is present on Ser509. The MBD domain occupies 546 to 617; sequence IATPEEVRLP…EHFSFSPRMP (72 aa). Thr548 is subject to Phosphothreonine. Residue Ser613 is modified to Phosphoserine. Residues 648–792 are disordered; the sequence is ITGKRGRPRN…KEKEEVTKAK (145 aa). 2 DNA-binding regions (a.T hook) span residues 649 to 661 and 670 to 682; these read TGKRGRPRNTEKA and KRGRGRPPKVKIT. Positions 656-668 are enriched in basic and acidic residues; the sequence is RNTEKAKTKEVPK. Positions 669 to 678 are enriched in basic residues; sequence VKRGRGRPPK. N6-acetyllysine; by KAT8 is present on Lys680. Positions 686–709 are enriched in basic and acidic residues; that stretch reads NKTDNRPLKKLEAQETLNEEDKAK. A coiled-coil region spans residues 693 to 792; the sequence is LKKLEAQETL…KEKEEVTKAK (100 aa). The segment covering 710 to 721 has biased composition (basic residues); sequence IAKSKKKMRQKV. Residues 725–734 are compositionally biased toward polar residues; that stretch reads ECQTTIQGQA. Composition is skewed to basic and acidic residues over residues 739–748 and 756–792; these read KQETKSLKQK and AEKEKGKTKQEKLKEKVKREKKEKVKMKEKEEVTKAK. Lys799 carries the N6-acetyllysine modification. The DDT domain occupies 848 to 913; sequence SGAFSDCLTI…LKAALHDPGF (66 aa). Lys866 participates in a covalent cross-link: Glycyl lysine isopeptide (Lys-Gly) (interchain with G-Cter in SUMO2). Ser1051 bears the Phosphoserine mark. Residues Lys1150 and Lys1172 each participate in a glycyl lysine isopeptide (Lys-Gly) (interchain with G-Cter in SUMO2) cross-link. 3 disordered regions span residues 1178-1220, 1283-1318, and 1330-1412; these read SNTT…PQAQ, LSSSVLTPDSSPGKLDPAPSQPPEEPEPDEAESSPD, and MPCN…RPPS. Ser1184 carries the phosphoserine modification. Positions 1186 to 1198 form a DNA-binding region, a.T hook 3; that stretch reads ARARGRPRKTKPG. Residues 1283–1293 show a composition bias toward low complexity; it reads LSSSVLTPDSS. Over residues 1306–1315 the composition is skewed to acidic residues; it reads EEPEPDEAES. Over residues 1345 to 1359 the composition is skewed to polar residues; sequence DQPTPSPQQLASSKP. Ser1397 is subject to Phosphoserine. Residues 1404 to 1416 constitute a DNA-binding region (a.T hook 4); the sequence is PKRRGRPPSKFFK. Position 1559 is a phosphoserine (Ser1559). Glycyl lysine isopeptide (Lys-Gly) (interchain with G-Cter in SUMO2) cross-links involve residues Lys1676 and Lys1709. The PHD-type zinc finger occupies 1676–1726; it reads KVTCLVCRKGDNDEFLLLCDGCDRGCHIYCHRPKMEAVPEGDWFCTVCLAQ. Disordered stretches follow at residues 1734-1755 and 1769-1789; these read QKPGFPKRGQKRKSGYSLNFSE and ESPAAGPRYSEEGLSPSKRRR. 4 positions are modified to phosphoserine: Ser1747, Ser1770, Ser1783, and Ser1785. A Bromo domain is found at 1793–1897; it reads RNHHSDLTFC…RFFESRWEEF (105 aa).

Belongs to the WAL family. Component of the NoRC-1 ISWI chromatin remodeling complex at least composed of SMARCA1 and BAZ2A/TIP5, which regulates the spacing of histone octamers on the DNA template to facilitate access to DNA. Within the NoRC-1 ISWI chromatin remodeling complex interacts with SMARCA1; the interaction is direct. Component of the NoRC-5 ISWI chromatin remodeling complex (also called the NoRC nucleolar-remodeling complex), at least composed of SMARCA5/SNF2H and BAZ2A/TIP5, which regulates the spacing of histone octamers on the DNA template to facilitate access to DNA. Within the NoRC-5 ISWI chromatin remodeling complexes interacts with SMARCA5/SNF2H; the interaction is direct. Interacts with TTF1; the interaction is required for recruitment of the NoRC-5 ISWI chromatin remodeling complex to rDNA. Interacts with HDAC1. Interacts with SIN3A. Interacts with DNMT1 and DNM3B. Interacts with BEND3 and USP21. Post-translationally, acetylation at Lys-680 by KAT8/MOF promotes its dissociation from pRNA, affecting heterochromatin formation, nucleosome positioning and rDNA silencing. Deacetylation by SIRT1 in late S phase enhances pRNA-binding, allowing de novo DNA methylation and heterochromatin formation. Acetylation is high during S phase and declines to background levels in late S phase when the silent copies of rRNA genes are replicated. In terms of processing, ubiquitinated. Deubiquitinated by USP21 leading to its stabilization. In terms of tissue distribution, expressed at moderate levels in most tissues analyzed, including heart, brain, placenta, lung, skeletal muscle, kidney and pancreas.

It is found in the nucleus. The protein resides in the nucleolus. Functionally, regulatory subunit of the ATP-dependent NoRC-1 and NoRC-5 ISWI chromatin remodeling complexes, which form ordered nucleosome arrays on chromatin and facilitate access to DNA during DNA-templated processes such as DNA replication, transcription, and repair. Both complexes regulate the spacing of nucleosomes along the chromatin and have the ability to slide mononucleosomes to the center of a DNA template. Directly stimulates the ATPase activity of SMARCA5 in the NoRC-5 ISWI chromatin remodeling complex. The NoRC-1 ISWI chromatin remodeling complex has a lower ATP hydrolysis rate than the NoRC-5 ISWI chromatin remodeling complex. Within the NoRC-5 ISWI chromatin remodeling complex, mediates silencing of a fraction of rDNA by recruiting histone-modifying enzymes and DNA methyltransferases, leading to heterochromatin formation and transcriptional silencing. In the complex, it plays a central role by being recruited to rDNA and by targeting chromatin modifying enzymes such as HDAC1, leading to repress RNA polymerase I transcription. Recruited to rDNA via its interaction with TTF1 and its ability to recognize and bind histone H4 acetylated on 'Lys-16' (H4K16ac), leading to deacetylation of H4K5ac, H4K8ac, H4K12ac but not H4K16ac. Specifically binds pRNAs, 150-250 nucleotide RNAs that are complementary in sequence to the rDNA promoter; pRNA-binding is required for heterochromatin formation and rDNA silencing. In Homo sapiens (Human), this protein is Bromodomain adjacent to zinc finger domain protein 2A (BAZ2A).